The sequence spans 370 residues: Anhydro-N-acetylmuramic acid kinase (370 aa).

ATP is bound at residue 13–20 (GTSMDGID).

Belongs to the anhydro-N-acetylmuramic acid kinase family.

It catalyses the reaction 1,6-anhydro-N-acetyl-beta-muramate + ATP + H2O = N-acetyl-D-muramate 6-phosphate + ADP + H(+). It functions in the pathway amino-sugar metabolism; 1,6-anhydro-N-acetylmuramate degradation. Its pathway is cell wall biogenesis; peptidoglycan recycling. Its function is as follows. Catalyzes the specific phosphorylation of 1,6-anhydro-N-acetylmuramic acid (anhMurNAc) with the simultaneous cleavage of the 1,6-anhydro ring, generating MurNAc-6-P. Is required for the utilization of anhMurNAc either imported from the medium or derived from its own cell wall murein, and thus plays a role in cell wall recycling. This chain is Anhydro-N-acetylmuramic acid kinase, found in Rhizobium etli (strain ATCC 51251 / DSM 11541 / JCM 21823 / NBRC 15573 / CFN 42).